We begin with the raw amino-acid sequence, 469 residues long: ATP-dependent protease ATPase subunit HslU (469 aa).

Residues Ile21, 63 to 68, Asp282, Glu347, and Arg419 contribute to the ATP site; that span reads GVGKTE.

The protein belongs to the ClpX chaperone family. HslU subfamily. In terms of assembly, a double ring-shaped homohexamer of HslV is capped on each side by a ring-shaped HslU homohexamer. The assembly of the HslU/HslV complex is dependent on binding of ATP.

It localises to the cytoplasm. ATPase subunit of a proteasome-like degradation complex; this subunit has chaperone activity. The binding of ATP and its subsequent hydrolysis by HslU are essential for unfolding of protein substrates subsequently hydrolyzed by HslV. HslU recognizes the N-terminal part of its protein substrates and unfolds these before they are guided to HslV for hydrolysis. The sequence is that of ATP-dependent protease ATPase subunit HslU from Petrotoga mobilis (strain DSM 10674 / SJ95).